The primary structure comprises 64 residues: MKPSGLTFAFLVVFMMAIMYNSVQVTADADADAEAEALANALAEAGILDWGKKVMDWIKDKMGK.

Residues 1-27 (MKPSGLTFAFLVVFMMAIMYNSVQVTA) form the signal peptide. The propeptide occupies 28–45 (DADADAEAEALANALAEA). A Methionine amide modification is found at Met62.

In terms of processing, truncated sequences of this peptide have also been found in the venom. It is possible they have been cleaved in the venom. In terms of tissue distribution, expressed by the venom gland.

Its subcellular location is the secreted. In terms of biological role, antimicrobial peptide with activities against E.coli (MIC=1.3 uM), S.aureus (MIC=3.1 uM), and S.cerevisiae (MIC=50 uM). Also shows histamine-releasing activity (32.9% at 10 uM). Does not show hemolytic activity, even at 50 uM. It is a short peptide for which no alpha-helical region has been predicted. The protein is U-poneritoxin(01)-Om1a of Odontomachus monticola (Trap-jaw ant).